The sequence spans 272 residues: Catabolic 3-dehydroquinate dehydratase (272 aa).

3-dehydroquinate contacts are provided by residues 66-68 (EFR) and arginine 102. Histidine 163 (proton donor/acceptor) is an active-site residue. The Schiff-base intermediate with substrate role is filled by lysine 190. Positions 232, 251, and 255 each coordinate 3-dehydroquinate.

It belongs to the type-I 3-dehydroquinase family.

The enzyme catalyses 3-dehydroquinate = 3-dehydroshikimate + H2O. It participates in aromatic compound metabolism; 3,4-dihydroxybenzoate biosynthesis; 3,4-dihydroxybenzoate from 3-dehydroquinate: step 1/2. Its function is as follows. Involved in the biosynthesis of protocatechuate. Catalyzes the catabolic dehydration of 3-dehydroquinate (DHQ) to yield 3-dehydroshikimate. The polypeptide is Catabolic 3-dehydroquinate dehydratase (Acinetobacter baylyi (strain ATCC 33305 / BD413 / ADP1)).